The following is a 513-amino-acid chain: ATP synthase subunit alpha (513 aa).

An ATP-binding site is contributed by Gly-169 to Thr-176.

This sequence belongs to the ATPase alpha/beta chains family. As to quaternary structure, F-type ATPases have 2 components, CF(1) - the catalytic core - and CF(0) - the membrane proton channel. CF(1) has five subunits: alpha(3), beta(3), gamma(1), delta(1), epsilon(1). CF(0) has three main subunits: a(1), b(2) and c(9-12). The alpha and beta chains form an alternating ring which encloses part of the gamma chain. CF(1) is attached to CF(0) by a central stalk formed by the gamma and epsilon chains, while a peripheral stalk is formed by the delta and b chains.

It localises to the cell inner membrane. The enzyme catalyses ATP + H2O + 4 H(+)(in) = ADP + phosphate + 5 H(+)(out). Produces ATP from ADP in the presence of a proton gradient across the membrane. The alpha chain is a regulatory subunit. In Haemophilus ducreyi (strain 35000HP / ATCC 700724), this protein is ATP synthase subunit alpha.